Here is a 162-residue protein sequence, read N- to C-terminus: Xanthine-guanine phosphoribosyltransferase (162 aa).

5-phospho-alpha-D-ribose 1-diphosphate is bound by residues R41 to G42 and D92 to T100. D93 is a binding site for Mg(2+). Guanine is bound by residues D96 and I139. 2 residues coordinate xanthine: D96 and I139. GMP-binding positions include D96–T100 and W138–I139.

It belongs to the purine/pyrimidine phosphoribosyltransferase family. XGPT subfamily. As to quaternary structure, homotetramer. It depends on Mg(2+) as a cofactor.

It is found in the cell inner membrane. The enzyme catalyses GMP + diphosphate = guanine + 5-phospho-alpha-D-ribose 1-diphosphate. It carries out the reaction XMP + diphosphate = xanthine + 5-phospho-alpha-D-ribose 1-diphosphate. It catalyses the reaction IMP + diphosphate = hypoxanthine + 5-phospho-alpha-D-ribose 1-diphosphate. The protein operates within purine metabolism; GMP biosynthesis via salvage pathway; GMP from guanine: step 1/1. Its pathway is purine metabolism; XMP biosynthesis via salvage pathway; XMP from xanthine: step 1/1. Purine salvage pathway enzyme that catalyzes the transfer of the ribosyl-5-phosphate group from 5-phospho-alpha-D-ribose 1-diphosphate (PRPP) to the N9 position of the 6-oxopurines guanine and xanthine to form the corresponding ribonucleotides GMP (guanosine 5'-monophosphate) and XMP (xanthosine 5'-monophosphate), with the release of PPi. To a lesser extent, also acts on hypoxanthine. The protein is Xanthine-guanine phosphoribosyltransferase of Chromohalobacter salexigens (strain ATCC BAA-138 / DSM 3043 / CIP 106854 / NCIMB 13768 / 1H11).